The following is a 276-amino-acid chain: Hydroxyethylthiazole kinase (276 aa).

Positions 126 and 172 each coordinate ATP. Gly-199 contacts substrate.

It belongs to the Thz kinase family. It depends on Mg(2+) as a cofactor.

The catalysed reaction is 5-(2-hydroxyethyl)-4-methylthiazole + ATP = 4-methyl-5-(2-phosphooxyethyl)-thiazole + ADP + H(+). It functions in the pathway cofactor biosynthesis; thiamine diphosphate biosynthesis; 4-methyl-5-(2-phosphoethyl)-thiazole from 5-(2-hydroxyethyl)-4-methylthiazole: step 1/1. Catalyzes the phosphorylation of the hydroxyl group of 4-methyl-5-beta-hydroxyethylthiazole (THZ). The chain is Hydroxyethylthiazole kinase from Burkholderia pseudomallei (strain 1106a).